Here is a 1230-residue protein sequence, read N- to C-terminus: Cullin-associated NEDD8-dissociated protein 1 (1230 aa).

Alanine 2 carries the post-translational modification N-acetylalanine. 12 HEAT repeats span residues 2 to 39 (ASAS…KDSI), 44 to 81 (DSER…KVKE), 83 to 119 (QVET…ELPP), 131 to 165 (CKKI…LSRQ), 171 to 208 (NFHP…SCGN), 210 to 247 (VFVD…QAGH), 248 to 282 (RIGE…FESF), 289 to 366 (EVYP…TRHE), 370 to 407 (EFYK…QTRP), 424 to 467 (PLTM…VLPG), 471 to 510 (QHIP…NHSP), and 515 to 552 (PHVQ…VIRP). The segment at 315 to 344 (DEDEDENAMDADGGDDDDQGSDDEYSDDDD) is disordered. Serine 335 is modified (phosphoserine). Serine 558 carries the phosphoserine modification. 15 HEAT repeats span residues 563–602 (PYIK…NLGD), 606–643 (PDLS…LKID), 646–683 (PVLG…NYSD), 688–725 (AMID…VYPS), 729–768 (KISG…TGTN), 770–808 (LGYM…ALTR), 809–845 (ACPK…LGEV), 852–889 (SGQL…GNLP), 890–927 (EYLP…GLKP), 928–960 (YVEN…KLTL), 961–998 (IDPE…DHPQ), 1002–1039 (PLLK…NKPS), 1043–1097 (DLLD…DSCL), 1099–1133 (RLDI…LSTL), and 1140–1189 (QRLD…IPEA). The residue at position 971 (lysine 971) is an N6-acetyllysine.

Belongs to the CAND family. Interacts with TBP. Part of a complex that contains CUL1 and RBX1. Interacts with unneddylated cullins: interacts with CUL1, CUL2, CUL3, CUL4A, CUL4B and CUL5. Does not bind neddylated CUL1. Interaction with cullins is abolished in presence of COMMD1, which antagonizes with CAND1 for interacting with cullins. Interacts with ERCC6. Interacts with DCUN1D1, DCUN1D2, DCUN1D3, DCUN1D4 and DCUN1D5; these interactions are bridged by cullins and strongly inhibits the neddylation of cullins.

It is found in the cytoplasm. The protein localises to the nucleus. Its function is as follows. Key assembly factor of SCF (SKP1-CUL1-F-box protein) E3 ubiquitin ligase complexes that promotes the exchange of the substrate-recognition F-box subunit in SCF complexes, thereby playing a key role in the cellular repertoire of SCF complexes. Acts as a F-box protein exchange factor. The exchange activity of CAND1 is coupled with cycles of neddylation conjugation: in the deneddylated state, cullin-binding CAND1 binds CUL1-RBX1, increasing dissociation of the SCF complex and promoting exchange of the F-box protein. Probably plays a similar role in other cullin-RING E3 ubiquitin ligase complexes. This chain is Cullin-associated NEDD8-dissociated protein 1 (Cand1), found in Mus musculus (Mouse).